Here is a 221-residue protein sequence, read N- to C-terminus: Deoxyribose-phosphate aldolase (221 aa).

Residue aspartate 89 is the Proton donor/acceptor of the active site. The Schiff-base intermediate with acetaldehyde role is filled by lysine 151. Catalysis depends on lysine 180, which acts as the Proton donor/acceptor.

This sequence belongs to the DeoC/FbaB aldolase family. DeoC type 1 subfamily.

It localises to the cytoplasm. The enzyme catalyses 2-deoxy-D-ribose 5-phosphate = D-glyceraldehyde 3-phosphate + acetaldehyde. It participates in carbohydrate degradation; 2-deoxy-D-ribose 1-phosphate degradation; D-glyceraldehyde 3-phosphate and acetaldehyde from 2-deoxy-alpha-D-ribose 1-phosphate: step 2/2. Catalyzes a reversible aldol reaction between acetaldehyde and D-glyceraldehyde 3-phosphate to generate 2-deoxy-D-ribose 5-phosphate. The sequence is that of Deoxyribose-phosphate aldolase from Brevibacillus brevis (strain 47 / JCM 6285 / NBRC 100599).